The sequence spans 773 residues: E3 ubiquitin-protein ligase msl-2 (773 aa).

Cys-41, Cys-44, Cys-59, His-61, Cys-64, Cys-67, Cys-78, and Cys-84 together coordinate Zn(2+). The RING-type zinc finger occupies 41-85 (CVVCCQLLVDPYSPKGKRCQHNVCRLCLRGKKHLFPSCTQCEGCS). A coiled-coil region spans residues 424–468 (VQTELQDAESLQKDFEDAKAAAEEAKEKEKDLHAISAELQKEDSD). Residues 460–525 (AELQKEDSDE…EKVKPPKPKC (66 aa)) are disordered. A CXC MSL2-type domain is found at 520 to 571 (PPKPKCRCGISGSSNTLTTCRNSRCPCYKSYNSCAGCHCVCCKNPHKEDYVE). Zn(2+) is bound by residues Cys-525, Cys-527, Cys-539, Cys-544, Cys-546, Cys-553, Cys-556, Cys-558, and Cys-561. Positions 571 to 773 (ESDEDDDLED…EEIMSGSDDL (203 aa)) are C-terminal disordered region (CTD). A compositionally biased stretch (acidic residues) spans 572 to 581 (SDEDDDLEDF). The disordered stretch occupies residues 572-616 (SDEDDDLEDFEMPKDVPEPMTQSEEPVVAEPRQEENSMAPPDSSA). The interval 620 to 685 (LVPLNNLQQS…SLPQYAYIMP (66 aa)) is clamp-binding domain (CBD). The tract at residues 650 to 708 (QGSKPLDPVTVGFTIRVQLQHTDGFGSLPQYAYIMPTIDPPNPPAPSLSPPPPPAPDRE) is pro/Bas region. Over residues 687 to 704 (IDPPNPPAPSLSPPPPPA) the composition is skewed to pro residues. The interval 687–773 (IDPPNPPAPS…EEIMSGSDDL (87 aa)) is disordered. The segment covering 705 to 714 (PDREVIEPPA) has biased composition (basic and acidic residues). Over residues 715-726 (KKFRTSRTRRGR) the composition is skewed to basic residues. Residues 742-759 (GSRSNSAAGDRSSATDNA) show a composition bias toward polar residues.

Belongs to the MSL2 family. As to quaternary structure, component of the male-specific lethal (MSL) histone acetyltransferase complex, composed of mof, mle, msl-1, msl-2 and msl-3 proteins, as well as roX1 and roX2 non-coding RNAs. When not associated with chromatin, the MSL complex associates with msl-2 mRNAs, possibly to regulate the amount of available MSL complex. Interacts with Clamp; promoting cooperative binding to DNA PionX sites and recruitment of the MSL complex to chromatin. In terms of processing, autoubiquitinated.

It localises to the nucleus. It is found in the chromosome. The enzyme catalyses S-ubiquitinyl-[E2 ubiquitin-conjugating enzyme]-L-cysteine + [acceptor protein]-L-lysine = [E2 ubiquitin-conjugating enzyme]-L-cysteine + N(6)-ubiquitinyl-[acceptor protein]-L-lysine.. It participates in protein modification; protein ubiquitination. Functionally, limiting component of the male-specific lethal (MSL) histone acetyltransferase complex, a multiprotein complex essential for elevating transcription of the single X chromosome in the male (X chromosome dosage compensation). The MSL complex specifically associates with the single X chromosome in males and mediates formation of H4K16ac, promoting a two-fold activation of X chromosome. Msl-2 is only produced in males, constituting the limiting component of the MSL complex. Within the MSL complex, msl-2 mediates the selective binding to the X chromosome and recruitment of the MSL complex via two different mechanisms. Recognizes DNA motifs that are enriched on X chromosome, named PionX sites, which are characterized by sequence features and distinct DNA conformation (base roll). Specific recognition of the X chromosome is also mediated by the formation of a gel-like state: msl-2 undergoes liquid-liquid phase separation upon binding to roX1 and roX2 non-coding RNAs, leading to nucleate the MSL complex on the X chromosome. Msl-2 is also required for translation and/or stability of msl-1 in males. Also acts as an E3 ubiquitin ligase: in complex with msl-1, mediates ubiquitination of histone H2B at 'Lys-34' (H2BK34Ub). Also catalyzes ubiquitination of msl-1, msl-3 and mof components of the MSL complex. The protein is E3 ubiquitin-protein ligase msl-2 of Drosophila melanogaster (Fruit fly).